Consider the following 289-residue polypeptide: MESLQDRAALLAWRKRQGHQNIGFVPTMGCLHEGHLTLLREARQRCEQVVVSIFVNPTQFGPNEDFDLYPRTFEADWALLEAEGCDALFHPTVAAIYPPENPNLTHVTLPALAGMLCGAVRPGHFDGVATVVTLLLNLVRPTSAFFGLKDYQQFTVLRSMVQDLAMPVEVIGIPTVREPDGLAMSSRNRYLDAPARAQAVALSQGLNRAYHAYQEGLHDATALAHLVEQTLRQAGIARIDYVAVRDALTLQPWQGKGAPVVLIAAHVGAARLIDNLVLGAQPIPSVTQE.

Position 28–35 (28–35 (MGCLHEGH)) interacts with ATP. Catalysis depends on histidine 35, which acts as the Proton donor. Residue glutamine 59 coordinates (R)-pantoate. Glutamine 59 serves as a coordination point for beta-alanine. 147–150 (GLKD) is an ATP binding site. Glutamine 153 provides a ligand contact to (R)-pantoate. ATP is bound by residues valine 176 and 184 to 187 (MSSR).

The protein belongs to the pantothenate synthetase family. In terms of assembly, homodimer.

The protein localises to the cytoplasm. It carries out the reaction (R)-pantoate + beta-alanine + ATP = (R)-pantothenate + AMP + diphosphate + H(+). The protein operates within cofactor biosynthesis; (R)-pantothenate biosynthesis; (R)-pantothenate from (R)-pantoate and beta-alanine: step 1/1. In terms of biological role, catalyzes the condensation of pantoate with beta-alanine in an ATP-dependent reaction via a pantoyl-adenylate intermediate. This Magnetococcus marinus (strain ATCC BAA-1437 / JCM 17883 / MC-1) protein is Pantothenate synthetase.